The primary structure comprises 104 residues: Large ribosomal subunit protein uL24 (104 aa).

This sequence belongs to the universal ribosomal protein uL24 family. Part of the 50S ribosomal subunit.

One of two assembly initiator proteins, it binds directly to the 5'-end of the 23S rRNA, where it nucleates assembly of the 50S subunit. Functionally, one of the proteins that surrounds the polypeptide exit tunnel on the outside of the subunit. This Bartonella henselae (strain ATCC 49882 / DSM 28221 / CCUG 30454 / Houston 1) (Rochalimaea henselae) protein is Large ribosomal subunit protein uL24.